The primary structure comprises 169 residues: ATP synthase subunit b (169 aa).

Residues 12-32 form a helical membrane-spanning segment; sequence PSVGLIFWKTVAFLIFLYILY. The tract at residues 69-107 is disordered; the sequence is AENEEARREAEQKAQQILREARDSAEELREEEKAKTRRE. The span at 87 to 107 shows a compositional bias: basic and acidic residues; that stretch reads REARDSAEELREEEKAKTRRE.

It belongs to the ATPase B chain family. In terms of assembly, F-type ATPases have 2 components, F(1) - the catalytic core - and F(0) - the membrane proton channel. F(1) has five subunits: alpha(3), beta(3), gamma(1), delta(1), epsilon(1). F(0) has three main subunits: a(1), b(2) and c(10-14). The alpha and beta chains form an alternating ring which encloses part of the gamma chain. F(1) is attached to F(0) by a central stalk formed by the gamma and epsilon chains, while a peripheral stalk is formed by the delta and b chains.

The protein resides in the cell inner membrane. F(1)F(0) ATP synthase produces ATP from ADP in the presence of a proton or sodium gradient. F-type ATPases consist of two structural domains, F(1) containing the extramembraneous catalytic core and F(0) containing the membrane proton channel, linked together by a central stalk and a peripheral stalk. During catalysis, ATP synthesis in the catalytic domain of F(1) is coupled via a rotary mechanism of the central stalk subunits to proton translocation. Its function is as follows. Component of the F(0) channel, it forms part of the peripheral stalk, linking F(1) to F(0). The polypeptide is ATP synthase subunit b (Salinibacter ruber (strain DSM 13855 / M31)).